Here is a 241-residue protein sequence, read N- to C-terminus: Probable transcriptional regulatory protein lin1570 (241 aa).

A compositionally biased stretch (polar residues) spans 1 to 14; it reads MAGHSKWNNIQGRK. Residues 1 to 22 form a disordered region; that stretch reads MAGHSKWNNIQGRKNAQDSKRS.

This sequence belongs to the TACO1 family.

It localises to the cytoplasm. This Listeria innocua serovar 6a (strain ATCC BAA-680 / CLIP 11262) protein is Probable transcriptional regulatory protein lin1570.